The chain runs to 207 residues: Ras-related protein RABH1d (207 aa).

16–23 (GDQSVGKT) serves as a coordination point for GTP. The Effector region motif lies at 38 to 46 (YQATIGIDF). GTP contacts are provided by residues 64-68 (DTAGQ), 122-125 (NKTD), and 152-153 (SA). 2 S-geranylgeranyl cysteine lipidation sites follow: Cys205 and Cys207. Cys207 carries the cysteine methyl ester modification.

It belongs to the small GTPase superfamily. Rab family.

It is found in the golgi apparatus membrane. In terms of biological role, protein transport. Regulator of membrane traffic from the Golgi apparatus towards the endoplasmic reticulum (ER). The protein is Ras-related protein RABH1d (RABH1D) of Arabidopsis thaliana (Mouse-ear cress).